The chain runs to 233 residues: Ribosome maturation factor RimM (233 aa).

The interval 1–51 (MKRKQDSKGAGSRGQGAGEKKQGAGGRGQGEKKQKKSPVPSPQSPVPDPDE) is disordered. Positions 11–28 (GSRGQGAGEKKQGAGGRG) are enriched in gly residues. The region spanning 145-226 (GEDEYHVVDL…RIEITPPPGL (82 aa)) is the PRC barrel domain.

It belongs to the RimM family. Binds ribosomal protein uS19.

The protein resides in the cytoplasm. Its function is as follows. An accessory protein needed during the final step in the assembly of 30S ribosomal subunit, possibly for assembly of the head region. Essential for efficient processing of 16S rRNA. May be needed both before and after RbfA during the maturation of 16S rRNA. It has affinity for free ribosomal 30S subunits but not for 70S ribosomes. This is Ribosome maturation factor RimM from Trichormus variabilis (strain ATCC 29413 / PCC 7937) (Anabaena variabilis).